A 765-amino-acid chain; its full sequence is Zinc transporter ZIP6 (765 aa).

Positions 1–20 (MATDLSVIMILTFALWVTSP) are cleaved as a signal peptide. Residues 21–335 (LHELQSTAAF…PKTYSLQIAW (315 aa)) are Extracellular-facing. The N-linked (GlcNAc...) asparagine glycan is linked to asparagine 68. Basic and acidic residues-rich tracts occupy residues 96–135 (DHEH…DHEH) and 174–186 (RPAE…RNIK). Disordered regions lie at residues 96 to 196 (DHEH…EVTS) and 209 to 257 (VETI…SEPR). Residues 187 to 196 (ESASSSEVTS) show a composition bias toward low complexity. Polar residues predominate over residues 224-233 (VNPSTPPSIT). The span at 238 to 247 (VGRLSRLARK) shows a compositional bias: basic residues. Residues 248 to 257 (KSNESVSEPR) are compositionally biased toward basic and acidic residues. N-linked (GlcNAc...) asparagine glycosylation is found at asparagine 250, asparagine 275, and asparagine 292. A helical membrane pass occupies residues 336-356 (LGGFIAISIISFLSLLGVILV). Residues 357-365 (PLMNRVFFK) are Cytoplasmic-facing. The chain crosses the membrane as a helical span at residues 366–386 (FLLSFLVALAVGTLSGDALLH). Topologically, residues 387-433 (LLPHSHASHQHSHSHEEPAMEMKRGPLFSHLSAQNIEESSYFDSTWK) are extracellular. The chain crosses the membrane as a helical span at residues 434 to 454 (GLTALGGLYFMFLVEHVLTLI). The Cytoplasmic portion of the chain corresponds to 455-667 (KQFKDKKKKN…LKAGMTVKQA (213 aa)). The tract at residues 458–519 (KDKKKKNQKK…EPSPFDSQQP (62 aa)) is disordered. Residues 475-495 (ESKKQLSKYDSQLSSNEEKVD) adopt a coiled-coil conformation. Serine 481 and serine 488 each carry phosphoserine. Basic and acidic residues predominate over residues 490–508 (NEEKVDPGERPESYLRADS). Polar residues predominate over residues 509-519 (QEPSPFDSQQP). A helical membrane pass occupies residues 668–688 (VLYNALSAMLAYLGMATGIFI). The Extracellular portion of the chain corresponds to 689–696 (GHYAENVS). Asparagine 694 is a glycosylation site (N-linked (GlcNAc...) asparagine). A helical membrane pass occupies residues 697–717 (MWIFALTAGLFMYVALVDMVP). At 718–734 (EMLHNDASDHGCSRWGY) the chain is on the cytoplasmic side. A helical membrane pass occupies residues 735-755 (FFLQNAGILLGFGIMLLISIF). The Extracellular portion of the chain corresponds to 756–765 (EHKIVFRINF).

It belongs to the ZIP transporter (TC 2.A.5) family. As to quaternary structure, interacts with SLC39A10; which triggers cells to undergo EMT and mitosis. Found in a complex with SLC39A6, SLC39A10 and with the 'Ser-727' phosphorylated form of STAT3 throughout mitosis. Found in a complex with SLC39A6, SLC39A10 and with NCAM1; this complex controls NCAM1 phosphorylation and integration into focal adhesion complexes during epithelial-to-mesenchymal transition (EMT). Found in a complex with SLC39A6, SLC39A10 and with GSK3B that controls NCAM1 phosphorylation. Post-translationally, cleaved on the N-terminus before locating to the plasma membrane. In terms of processing, N-glycosylated. Phosphorylated by ZAP70 in response to TCR stimulation leading to its activation. Highly expressed in the brain and testis. In the brain strongly expressed in the CA1 and CA3 regions, Purkinje cells in cerebellum and dentate gyrus in hippocampus. In testis found in spermatids or mature sperms in the central areas of seminiferous tubules.

It localises to the cell membrane. The protein resides in the cell projection. The protein localises to the lamellipodium membrane. It is found in the membrane raft. Its subcellular location is the apical cell membrane. The catalysed reaction is Zn(2+)(in) = Zn(2+)(out). Functionally, zinc-influx transporter which plays a role in zinc homeostasis and in the induction of epithelial-to-mesenchymal transition (EMT). When associated with SLC39A10, the heterodimer formed by SLC39A10 and SLC39A6 mediates cellular zinc uptake to trigger cells to undergo epithelial- to-mesenchymal transition (EMT). The SLC39A10-SLC39A6 heterodimer also controls NCAM1 phosphorylation and its integration into focal adhesion complexes during EMT. Zinc influx inactivates GSK3B, enabling unphosphorylated SNAI1 in the nucleus to down-regulate adherence genes such as E-cadherin, causing loss of cell adherence. In addition, the SLC39A10-SLC39A6 heterodimer plays an essentiel role in initiating mitosis by importing zinc into cells to initiate a pathway resulting in the onset of mitosis. Participates in the T-cell receptor signaling regulation by mediating cellular zinc uptake into activated lymphocytes. Regulates the zinc influx necessary for proper meiotic progression to metaphase II (MII) that allows the oocyte-to-egg transition. In Mus musculus (Mouse), this protein is Zinc transporter ZIP6.